A 495-amino-acid polypeptide reads, in one-letter code: Lanosterol 14-alpha demethylase erg11 (495 aa).

The helical transmembrane segment at 2 to 22 (AFSLVSILLSIALAWYVGYII) threads the bilayer. Cys442 lines the heme pocket.

Belongs to the cytochrome P450 family. Interacts with dap1. Heme is required as a cofactor.

Its subcellular location is the endoplasmic reticulum. It is found in the membrane. It carries out the reaction a 14alpha-methyl steroid + 3 reduced [NADPH--hemoprotein reductase] + 3 O2 = a Delta(14) steroid + formate + 3 oxidized [NADPH--hemoprotein reductase] + 4 H2O + 4 H(+). The catalysed reaction is a 14alpha-methyl steroid + reduced [NADPH--hemoprotein reductase] + O2 = a 14alpha-hydroxymethyl steroid + oxidized [NADPH--hemoprotein reductase] + H2O + H(+). The enzyme catalyses a 14alpha-hydroxymethyl steroid + reduced [NADPH--hemoprotein reductase] + O2 = a 14alpha-formyl steroid + oxidized [NADPH--hemoprotein reductase] + 2 H2O + H(+). It catalyses the reaction a 14alpha-formyl steroid + reduced [NADPH--hemoprotein reductase] + O2 = a Delta(14) steroid + formate + oxidized [NADPH--hemoprotein reductase] + H2O + 2 H(+). It carries out the reaction lanosterol + 3 reduced [NADPH--hemoprotein reductase] + 3 O2 = 4,4-dimethyl-5alpha-cholesta-8,14,24-trien-3beta-ol + formate + 3 oxidized [NADPH--hemoprotein reductase] + 4 H2O + 4 H(+). The catalysed reaction is lanosterol + reduced [NADPH--hemoprotein reductase] + O2 = 32-hydroxylanosterol + oxidized [NADPH--hemoprotein reductase] + H2O + H(+). The enzyme catalyses 32-hydroxylanosterol + reduced [NADPH--hemoprotein reductase] + O2 = 32-oxolanosterol + oxidized [NADPH--hemoprotein reductase] + 2 H2O + H(+). It catalyses the reaction 32-oxolanosterol + reduced [NADPH--hemoprotein reductase] + O2 = 4,4-dimethyl-5alpha-cholesta-8,14,24-trien-3beta-ol + formate + oxidized [NADPH--hemoprotein reductase] + H2O + 2 H(+). It carries out the reaction eburicol + 3 reduced [NADPH--hemoprotein reductase] + 3 O2 = 14-demethyleburicol + formate + 3 oxidized [NADPH--hemoprotein reductase] + 4 H2O + 4 H(+). The catalysed reaction is eburicol + reduced [NADPH--hemoprotein reductase] + O2 = 32-hydroxyeburicol + oxidized [NADPH--hemoprotein reductase] + H2O + H(+). The enzyme catalyses 32-hydroxyeburicol + reduced [NADPH--hemoprotein reductase] + O2 = 32-oxoeburicol + oxidized [NADPH--hemoprotein reductase] + 2 H2O + H(+). It catalyses the reaction 32-oxoeburicol + reduced [NADPH--hemoprotein reductase] + O2 = 14-demethyleburicol + formate + oxidized [NADPH--hemoprotein reductase] + H2O + 2 H(+). Its pathway is steroid biosynthesis; zymosterol biosynthesis; zymosterol from lanosterol: step 1/6. The protein operates within steroid metabolism; ergosterol biosynthesis. Functionally, sterol 14alpha-demethylase that plays a critical role in the third module of ergosterol biosynthesis pathway, being ergosterol the major sterol component in fungal membranes that participates in a variety of functions. The third module or late pathway involves the ergosterol synthesis itself through consecutive reactions that mainly occur in the endoplasmic reticulum (ER) membrane. In filamentous fungi, during the initial step of this module, lanosterol (lanosta-8,24-dien-3beta-ol) can be metabolized to eburicol. Sterol 14alpha-demethylase catalyzes the three-step oxidative removal of the 14alpha-methyl group (C-32) of both these sterols in the form of formate, and converts eburicol and lanosterol to 14-demethyleburicol (4,4,24-trimethylergosta-8,14,24(28)-trienol) and 4,4-dimethyl-5alpha-cholesta-8,14,24-trien-3beta-ol, respectively, which are further metabolized by other enzymes in the pathway to ergosterol. Can also use substrates not intrinsic to fungi, such as 24,25-dihydrolanosterol (DHL), producing 4,4-dimethyl-8,14-cholestadien-3-beta-ol, but at lower rates than the endogenous substrates. The protein is Lanosterol 14-alpha demethylase erg11 of Schizosaccharomyces pombe (strain 972 / ATCC 24843) (Fission yeast).